Here is a 321-residue protein sequence, read N- to C-terminus: Gap junction delta-2 protein (321 aa).

The Cytoplasmic segment spans residues 1–19; it reads MGEWTILERLLEAAVQQHS. A helical transmembrane segment spans residues 20 to 42; it reads TMIGRILLTVVVIFRILIVAIVG. At 43–75 the chain is on the extracellular side; that stretch reads ETVYDDEQTMFVCNTLQPGCNQACYDRAFPISH. The helical transmembrane segment at 76–98 threads the bilayer; that stretch reads IRYWVFQIIMVCTPSLCFITYSV. The Cytoplasmic portion of the chain corresponds to 99 to 197; it reads HQSAKQRERR…KLRRQEGISR (99 aa). Residues 118–141 are disordered; the sequence is RDPPESIGGPGGTGGGGSGGGKRE. Positions 125-137 are enriched in gly residues; that stretch reads GGPGGTGGGGSGG. A helical membrane pass occupies residues 198–220; that stretch reads FYIIQVVFRNALEIGFLVGQYFL. Residues 221–252 lie on the Extracellular side of the membrane; that stretch reads YGFSVPGLYECNRYPCIKEVECYVSRPTEKTV. Residues 253–275 form a helical membrane-spanning segment; that stretch reads FLVFMFAVSGICVVLNLAELNHL. Residues 276 to 321 lie on the Cytoplasmic side of the membrane; that stretch reads GWRKIKLAVRGAQAKRKSIYEIRNKDLPRVSVPNFGRTQSSDSAYV.

The protein belongs to the connexin family. Delta-type subfamily. A connexon is composed of a hexamer of connexins. Highly expressed in neurons.

The protein resides in the cell membrane. It is found in the cell junction. The protein localises to the gap junction. Functionally, one gap junction consists of a cluster of closely packed pairs of transmembrane channels, the connexons, through which materials of low MW diffuse from one cell to a neighboring cell. This chain is Gap junction delta-2 protein (GJD2), found in Homo sapiens (Human).